The following is a 547-amino-acid chain: G protein-coupled receptor associated sorting protein 3 (547 aa).

Basic residues-rich tracts occupy residues 1–10 (MTGTKNKTRA) and 38–48 (AKTRAKAKAKT). Positions 1-53 (MTGTKNKTRAQAKTEKKPVTQAKAGAEREATGVVRPVAKTRAKAKAKTGSKTD) are disordered.

Belongs to the GPRASP family. As to quaternary structure, homodimer.

The protein resides in the cytoplasm. The protein localises to the nucleus. Its function is as follows. Survival and differentiation promoting protein that plays a role in the regulation of neurosynaptogenesis. Induces phosphatase PP2A activity which results in APP dephosphorylation and inhibits BACE1-mediated processing of APP. The chain is G protein-coupled receptor associated sorting protein 3 (GPRASP3) from Macaca fascicularis (Crab-eating macaque).